A 158-amino-acid polypeptide reads, in one-letter code: Respiratory supercomplex factor 1, mitochondrial (158 aa).

The 92-residue stretch at 5 to 96 folds into the HIG1 domain; sequence PSSFDSDADD…TNKNERESHE (92 aa). 2 helical membrane-spanning segments follow: residues 32–52 and 68–88; these read PLVPLGTLATTGAVLLAVLNV and VALQGFTLIALVAGSYIYGTN. Residues 88–158 are a coiled coil; the sequence is NKNERESHEE…LKDLEERLKK (71 aa). A disordered region spans residues 128–158; it reads AELARQKAKEMEQETSKLQQELKDLEERLKK.

It belongs to the RCF1 family. Associates with the respiratory chain complex III/complex IV supercomplex.

The protein resides in the mitochondrion membrane. Its function is as follows. Cytochrome c oxidase subunit which plays a role in assembly of respiratory supercomplexes. The polypeptide is Respiratory supercomplex factor 1, mitochondrial (RCF1) (Kluyveromyces lactis (strain ATCC 8585 / CBS 2359 / DSM 70799 / NBRC 1267 / NRRL Y-1140 / WM37) (Yeast)).